A 129-amino-acid chain; its full sequence is Large ribosomal subunit protein bL12 (129 aa).

This sequence belongs to the bacterial ribosomal protein bL12 family. As to quaternary structure, homodimer. Part of the ribosomal stalk of the 50S ribosomal subunit. Forms a multimeric L10(L12)X complex, where L10 forms an elongated spine to which 2 to 4 L12 dimers bind in a sequential fashion. Binds GTP-bound translation factors.

Functionally, forms part of the ribosomal stalk which helps the ribosome interact with GTP-bound translation factors. Is thus essential for accurate translation. The chain is Large ribosomal subunit protein bL12 from Pseudothermotoga lettingae (strain ATCC BAA-301 / DSM 14385 / NBRC 107922 / TMO) (Thermotoga lettingae).